We begin with the raw amino-acid sequence, 46 residues long: Escargot/snail protein homolog (46 aa).

3 C2H2-type zinc fingers span residues 1–4 (IRTH), 8–30 (CKCP…TTHH), and 36–46 (FSCQHCNRAFA).

This sequence belongs to the snail C2H2-type zinc-finger protein family.

The protein localises to the nucleus. The protein is Escargot/snail protein homolog of Oryzias latipes (Japanese rice fish).